We begin with the raw amino-acid sequence, 342 residues long: S-adenosylmethionine:tRNA ribosyltransferase-isomerase (342 aa).

This sequence belongs to the QueA family. Monomer.

It is found in the cytoplasm. It catalyses the reaction 7-aminomethyl-7-carbaguanosine(34) in tRNA + S-adenosyl-L-methionine = epoxyqueuosine(34) in tRNA + adenine + L-methionine + 2 H(+). It functions in the pathway tRNA modification; tRNA-queuosine biosynthesis. Transfers and isomerizes the ribose moiety from AdoMet to the 7-aminomethyl group of 7-deazaguanine (preQ1-tRNA) to give epoxyqueuosine (oQ-tRNA). The polypeptide is S-adenosylmethionine:tRNA ribosyltransferase-isomerase (Streptococcus agalactiae serotype III (strain NEM316)).